Consider the following 23-residue polypeptide: Coenzyme PQQ synthesis protein A (23 aa).

Positions 15-19 form a cross-link, pyrroloquinoline quinone (Glu-Tyr); that stretch reads EVTLY.

Belongs to the PqqA family.

Its pathway is cofactor biosynthesis; pyrroloquinoline quinone biosynthesis. Required for coenzyme pyrroloquinoline quinone (PQQ) biosynthesis. PQQ is probably formed by cross-linking a specific glutamate to a specific tyrosine residue and excising these residues from the peptide. This Colwellia psychrerythraea (strain 34H / ATCC BAA-681) (Vibrio psychroerythus) protein is Coenzyme PQQ synthesis protein A.